Here is a 468-residue protein sequence, read N- to C-terminus: ERO1-like protein alpha (468 aa).

The first 23 residues, 1-23 (MGHRWGFLIVFLGAVGLLGSGYG), serve as a signal peptide directing secretion. Intrachain disulfides connect Cys35/Cys48, Cys37/Cys46, Cys85/Cys391, Cys94/Cys99, Cys94/Cys131, Cys99/Cys104, Cys208/Cys241, and Cys394/Cys397. Phosphoserine occurs at positions 106, 143, and 145. Arg187, Thr189, and Trp200 together coordinate FAD. Residues Ser252 and His255 each coordinate FAD. N-linked (GlcNAc...) asparagine glycosylation occurs at Asn280. FAD is bound by residues Arg287 and Arg300. An N-linked (GlcNAc...) asparagine glycan is attached at Asn384.

The protein belongs to the EROs family. As to quaternary structure, predominantly monomer. May function both as a monomer and a homodimer. Interacts with PDILT. Interacts with ERP44; the interaction results in retention of ERO1A in the endoplasmic reticulum. It depends on FAD as a cofactor. In terms of processing, the Cys-94/Cys-99 and Cys-394/Cys-397 disulfide bonds constitute the redox-active center. The Cys-94/Cys-99 disulfide bond may accept electron from P4HB and funnel them to the active site disulfide Cys-394/Cys-397. The regulatory Cys-99/Cys-104 disulfide bond stabilizes the other regulatory bond Cys-94/Cys-131. Phosphorylated on Ser-145 by FAM20C in the Golgi which increases its enzymatic activity. Phosphorylation is induced by lactation. It is also induced by hypoxia and reductive stress.

It localises to the endoplasmic reticulum membrane. The protein localises to the golgi apparatus lumen. The protein resides in the secreted. Its subcellular location is the cell projection. It is found in the dendrite. Its activity is regulated as follows. Enzyme activity is tightly regulated to prevent the accumulation of reactive oxygen species in the endoplasmic reticulum. Reversibly down-regulated by the formation of disulfide bonds between the active site Cys-94 and Cys-131, and between Cys-99 and Cys-104. Glutathione may be required to regulate its activity in the endoplasmic reticulum. Its function is as follows. Oxidoreductase involved in disulfide bond formation in the endoplasmic reticulum. Efficiently reoxidizes P4HB/PDI, the enzyme catalyzing protein disulfide formation, in order to allow P4HB to sustain additional rounds of disulfide formation. Following P4HB reoxidation, passes its electrons to molecular oxygen via FAD, leading to the production of reactive oxygen species (ROS) in the cell. Required for the proper folding of immunoglobulins. Plays an important role in ER stress-induced, CHOP-dependent apoptosis by activating the inositol 1,4,5-trisphosphate receptor IP3R1. This chain is ERO1-like protein alpha, found in Sus scrofa (Pig).